Reading from the N-terminus, the 360-residue chain is uncharacterized protein (360 aa).

An ABC transporter domain is found at 4–235 (LSLQHIQKIY…PANMFVSGFI (232 aa)). Residue 37–44 (GPSGCGKS) participates in ATP binding.

The protein belongs to the ABC transporter superfamily.

This is an uncharacterized protein from Escherichia coli (strain K12).